The chain runs to 95 residues: Acyl carrier protein AcpXL (95 aa).

The region spanning 4–90 is the Carrier domain; that stretch reads TATFDKVADI…NLCAKIDELR (87 aa). Ser-39 carries the O-(pantetheine 4'-phosphoryl)serine modification.

Post-translationally, 4'-phosphopantetheine is transferred from CoA to a specific serine of apo-ACP by AcpS. This modification is essential for activity because fatty acids are bound in thioester linkage to the sulfhydryl of the prosthetic group.

The protein localises to the cytoplasm. Its pathway is glycolipid biosynthesis; KDO(2)-lipid A biosynthesis. Its function is as follows. Carrier of the growing fatty acid chain in fatty acid biosynthesis. Is involved in the transfer of long hydroxylated fatty acids to lipid A. The chain is Acyl carrier protein AcpXL (acpXL) from Rhizobium meliloti (strain 1021) (Ensifer meliloti).